Consider the following 734-residue polypeptide: Photosystem I P700 chlorophyll a apoprotein A2 (734 aa).

8 helical membrane passes run 46-69, 135-158, 175-199, 273-291, 330-353, 369-395, 417-439, and 517-535; these read IFAS…FHVA, LYGG…LHLQ, LNHH…HVAI, MAHH…GHMY, LHFQ…QHMY, AALY…IFFI, AIIS…LYVH, and FLVH…LILV. Residues C559 and C568 each coordinate [4Fe-4S] cluster. Transmembrane regions (helical) follow at residues 575-596 and 643-665; these read AFYL…YWHW and LSVW…MFLI. Chlorophyll a-binding residues include H654, M662, and Y670. W671 contacts phylloquinone. The chain crosses the membrane as a helical span at residues 707–727; sequence LVGLAHFSVGYIFTYAAFLIA.

This sequence belongs to the PsaA/PsaB family. The PsaA/B heterodimer binds the P700 chlorophyll special pair and subsequent electron acceptors. PSI consists of a core antenna complex that captures photons, and an electron transfer chain that converts photonic excitation into a charge separation. The eukaryotic PSI reaction center is composed of at least 11 subunits. Requires P700 is a chlorophyll a/chlorophyll a' dimer, A0 is one or more chlorophyll a, A1 is one or both phylloquinones and FX is a shared 4Fe-4S iron-sulfur center. as cofactor.

Its subcellular location is the plastid. The protein resides in the chloroplast thylakoid membrane. The enzyme catalyses reduced [plastocyanin] + hnu + oxidized [2Fe-2S]-[ferredoxin] = oxidized [plastocyanin] + reduced [2Fe-2S]-[ferredoxin]. Functionally, psaA and PsaB bind P700, the primary electron donor of photosystem I (PSI), as well as the electron acceptors A0, A1 and FX. PSI is a plastocyanin-ferredoxin oxidoreductase, converting photonic excitation into a charge separation, which transfers an electron from the donor P700 chlorophyll pair to the spectroscopically characterized acceptors A0, A1, FX, FA and FB in turn. Oxidized P700 is reduced on the lumenal side of the thylakoid membrane by plastocyanin. This Physcomitrium patens (Spreading-leaved earth moss) protein is Photosystem I P700 chlorophyll a apoprotein A2.